A 485-amino-acid chain; its full sequence is Glutamate--tRNA ligase (485 aa).

A 'HIGH' region motif is present at residues 11–21 (PSPTGHLHIGN). The 'KMSKS' region motif lies at 252–256 (KLSKR). Lys-255 contributes to the ATP binding site.

It belongs to the class-I aminoacyl-tRNA synthetase family. Glutamate--tRNA ligase type 1 subfamily. Monomer.

It is found in the cytoplasm. The enzyme catalyses tRNA(Glu) + L-glutamate + ATP = L-glutamyl-tRNA(Glu) + AMP + diphosphate. Catalyzes the attachment of glutamate to tRNA(Glu) in a two-step reaction: glutamate is first activated by ATP to form Glu-AMP and then transferred to the acceptor end of tRNA(Glu). In Bacillus cereus (strain ATCC 10987 / NRS 248), this protein is Glutamate--tRNA ligase.